The following is a 756-amino-acid chain: Pro-neuregulin-2, membrane-bound isoform (756 aa).

Residues 1 to 19 constitute a propeptide that is removed on maturation; that stretch reads MRRDPAPGFSMLLFGVSLA. Residues 20–315 lie on the Extracellular side of the membrane; sequence CYSPSLKSVQ…KEAEELYQKR (296 aa). 3 N-linked (GlcNAc...) asparagine glycosylation sites follow: N55, N186, and N254. Positions 145–240 constitute an Ig-like C2-type domain; it reads PKLKKMKSQT…RGRLHVNSVS (96 aa). 4 cysteine pairs are disulfide-bonded: C165/C219, C253/C267, C261/C278, and C280/C289. The EGF-like domain occupies 249-290; sequence HARKCNETAKSYCVNGGVCYYIEGINQLSCKCPVGYTGDRCQ. N296 carries N-linked (GlcNAc...) asparagine glycosylation. A helical membrane pass occupies residues 316–336; it reads VLTITGICVALLVVGIVCVVA. Topologically, residues 337 to 756 are cytoplasmic; that stretch reads YCKTKKQRRQ…TRAKQDSGPL (420 aa). Disordered stretches follow at residues 402 to 439, 557 to 578, 608 to 694, and 711 to 756; these read TFSGSHSCSPSHHCSTATPTSSHRHESHTWSLERSESL, LLRHPAPPGPGPGSGPGADMQR, ASPF…DGAL, and LRSD…SGPL. A compositionally biased stretch (low complexity) spans 404 to 416; it reads SGSHSCSPSHHCS. Over residues 424–437 the composition is skewed to basic and acidic residues; the sequence is HRHESHTWSLERSE. Positions 654-682 are enriched in low complexity; that stretch reads LNGLAAQRARAARDSLSLSSGSGCGSASA.

The protein belongs to the neuregulin family. As to quaternary structure, interacts with ERBB3 and ERBB4. Proteolytic cleavage close to the plasma membrane on the external face leads to the release of the soluble growth factor form. Post-translationally, extensive glycosylation precedes the proteolytic cleavage. Highest expression in the brain, with lower levels in the lung. In the cerebellum, found in granule and Purkinje cells.

The protein localises to the cell membrane. It is found in the secreted. In terms of biological role, direct ligand for ERBB3 and ERBB4 tyrosine kinase receptors. Concomitantly recruits ERBB1 and ERBB2 coreceptors, resulting in ligand-stimulated tyrosine phosphorylation and activation of the ERBB receptors. May also promote the heterodimerization with the EGF receptor. The protein is Pro-neuregulin-2, membrane-bound isoform (Nrg2) of Mus musculus (Mouse).